The following is a 157-amino-acid chain: MSKPFQPISDVINTSPKNKSQSFNEIYGEPENFLEIEVKNPLTHGYGSNLFTDYEIVCRTNIPAFKKRESRIRRRYSDFVAFRKILEQETTRVIIPPLPGKIFLNSNKFNDLNIEKRRQGLEKFLIVVSGHPLLQTGSKSLIEFIQNEKWDPKQIIY.

A disordered region spans residues 1 to 21 (MSKPFQPISDVINTSPKNKSQ). Over residues 11–21 (VINTSPKNKSQ) the composition is skewed to polar residues. The PX domain occupies 32–152 (NFLEIEVKNP…EFIQNEKWDP (121 aa)). Residues Arg-75, Ser-77, Lys-101, and Arg-117 each contribute to the a 1,2-diacyl-sn-glycero-3-phospho-(1D-myo-inositol-3-phosphate) site.

The protein belongs to the sorting nexin family.

The protein localises to the cytoplasm. It is found in the golgi apparatus membrane. It localises to the prevacuolar compartment membrane. Its function is as follows. Required for retention of late Golgi membrane proteins. Component of the retrieval machinery that functions by direct interaction with the cytosolic tails of certain TGN membrane proteins during the sorting/budding process at the prevacuolar compartment. Binds phosphatidylinositol 3-phosphate (PtdIns(P3)). This Candida albicans (strain SC5314 / ATCC MYA-2876) (Yeast) protein is Sorting nexin-3 (SNX3).